Reading from the N-terminus, the 233-residue chain is Cilia- and flagella-associated protein 299 (233 aa).

Abundantly expressed in testis, specifically in spermatogonia and primary spermatocytes but not in secondary spermatocytes and spermatids.

The protein localises to the cytoplasm. Its subcellular location is the nucleus. In terms of biological role, may be involved in spermatogenesis. The sequence is that of Cilia- and flagella-associated protein 299 from Mus musculus (Mouse).